The sequence spans 341 residues: Cytochrome c biogenesis protein CcsA (341 aa).

8 helical membrane-spanning segments follow: residues 16–36, 37–57, 68–88, 97–117, 142–162, 249–269, 276–296, and 310–330; these read LILLLTMLIYWAGAAFPGMSI, LPTLGTAGVAIANLSIATLLG, LSNLYESLFFLAWGVTAVHLI, LVGVVTTPVAMGITAFAALSL, VMMLSYATLMVGAVLAIAFLI, IIGLGFPLLTIGIIAGAVWAN, WSWDPKETWALITWLVFAAYL, and AILAASGFIVVWVCYLGVNLL.

Belongs to the CcmF/CycK/Ccl1/NrfE/CcsA family. As to quaternary structure, may interact with ccs1.

The protein localises to the cellular thylakoid membrane. In terms of biological role, required during biogenesis of c-type cytochromes (cytochrome c6 and cytochrome f) at the step of heme attachment. This Rippkaea orientalis (strain PCC 8801 / RF-1) (Cyanothece sp. (strain PCC 8801)) protein is Cytochrome c biogenesis protein CcsA.